Here is a 315-residue protein sequence, read N- to C-terminus: L-lactate dehydrogenase (315 aa).

NAD(+) contacts are provided by Val-12, Asp-33, and Tyr-65. Substrate is bound by residues Gln-82, Arg-88, and 120–123; that span reads NPVD. NAD(+)-binding positions include 118–120 and Ser-143; that span reads ISN. Residue 148–151 participates in substrate binding; sequence DTSR. Beta-D-fructose 1,6-bisphosphate contacts are provided by Arg-153 and His-168. His-175 acts as the Proton acceptor in catalysis. Tyr-219 carries the phosphotyrosine modification. Thr-228 lines the substrate pocket.

This sequence belongs to the LDH/MDH superfamily. LDH family. As to quaternary structure, homotetramer.

It is found in the cytoplasm. The catalysed reaction is (S)-lactate + NAD(+) = pyruvate + NADH + H(+). The protein operates within fermentation; pyruvate fermentation to lactate; (S)-lactate from pyruvate: step 1/1. Allosterically activated by fructose 1,6-bisphosphate (FBP). Catalyzes the conversion of lactate to pyruvate. The polypeptide is L-lactate dehydrogenase (Mycoplasmopsis pulmonis (strain UAB CTIP) (Mycoplasma pulmonis)).